The following is a 73-amino-acid chain: Conotoxin ArMKLT2-022 (73 aa).

A signal peptide spans 1–22 (MKLTCVLIIAVLFLTACQLTTG). Positions 23–40 (EQKDHAQRSADRNSKLTR) are excised as a propeptide. A Pyrrolidone carboxylic acid modification is found at glutamine 41. 3 disulfides stabilise this stretch: cysteine 42–cysteine 56, cysteine 49–cysteine 60, and cysteine 55–cysteine 67.

Belongs to the conotoxin O1 superfamily. In terms of tissue distribution, expressed by the venom duct.

It localises to the secreted. This Conus arenatus (Sand-dusted cone) protein is Conotoxin ArMKLT2-022.